The sequence spans 302 residues: L-aminoadipate-semialdehyde dehydrogenase-phosphopantetheinyl transferase (302 aa).

CoA contacts are provided by residues Arg44, 83-88 (RTGKGK), and 105-108 (NVSH). Residues Asp126 and Glu178 each coordinate Mg(2+). Residue 178-182 (ESFIK) participates in CoA binding.

This sequence belongs to the P-Pant transferase superfamily. AcpS family. In terms of assembly, monomer. Mg(2+) serves as cofactor.

The protein resides in the cytoplasm. It is found in the cytosol. The enzyme catalyses apo-[ACP] + CoA = holo-[ACP] + adenosine 3',5'-bisphosphate + H(+). The catalysed reaction is apo-[ACP] + acetyl-CoA = acetyl-[ACP] + adenosine 3',5'-bisphosphate + H(+). In terms of biological role, catalyzes the post-translational modification of target proteins by phosphopantetheine. Can transfer the 4'-phosphopantetheine moiety from coenzyme A, regardless of whether the CoA is presented in the free thiol form or as an acetyl thioester, to a serine residue of a broad range of acceptors. This chain is L-aminoadipate-semialdehyde dehydrogenase-phosphopantetheinyl transferase (aasdhppt), found in Xenopus laevis (African clawed frog).